Consider the following 662-residue polypeptide: Probable lysophospholipase 3 (662 aa).

An N-terminal signal peptide occupies residues 1-19; that stretch reads MLFNCFGILALLQILPALA. N-linked (GlcNAc...) asparagine glycans are attached at residues Asn74, Asn127, Asn162, Asn196, Asn266, Asn274, Asn303, Asn376, Asn406, Asn411, Asn483, Asn518, Asn523, Asn547, Asn556, Asn574, Asn596, and Asn613. A PLA2c domain is found at 76-617; sequence TCPSDYMLRP…EQYCWNGTTV (542 aa).

It belongs to the lysophospholipase family.

The protein localises to the secreted. The enzyme catalyses a 1-acyl-sn-glycero-3-phosphocholine + H2O = sn-glycerol 3-phosphocholine + a fatty acid + H(+). In terms of biological role, catalyzes the release of fatty acids from lysophospholipids. The chain is Probable lysophospholipase 3 (plb3) from Schizosaccharomyces pombe (strain 972 / ATCC 24843) (Fission yeast).